Here is a 565-residue protein sequence, read N- to C-terminus: Ubiquitin carboxyl-terminal hydrolase 21 (565 aa).

Residues Met1 to Glu14 are compositionally biased toward basic and acidic residues. Disordered regions lie at residues Met1–Pro103, Ala109–Gly128, and Leu142–Phe163. Pro residues predominate over residues Ala42–Gly57. Over residues Pro58–Arg70 the composition is skewed to basic and acidic residues. A compositionally biased stretch (low complexity) spans Gly71 to Leu82. Residues Glu134–Arg152 carry the Nuclear export signal motif. One can recognise a USP domain in the interval Val212 to Met558. The active-site Nucleophile is the Cys221. Positions 384, 387, 437, and 440 each coordinate Zn(2+). The active-site Proton acceptor is the His518.

It belongs to the peptidase C19 family. USP21 subfamily. In terms of assembly, interacts with BEND3.

Its subcellular location is the cytoplasm. It localises to the nucleus. It carries out the reaction Thiol-dependent hydrolysis of ester, thioester, amide, peptide and isopeptide bonds formed by the C-terminal Gly of ubiquitin (a 76-residue protein attached to proteins as an intracellular targeting signal).. Its function is as follows. Deubiquitinating enzyme that hydrolyzes 'Lys-6'- and 'Lys-11'-linked polyubiquitin. Also hydrolyzes heterotypic (mixed and branched) and homotypic chains. Important regulator of energy metabolism. Glucose and fatty acids trigger its nuclear translocation by CBP-dependent acetylation. In the nucleus, deubiquitinates and stabilizes the nuclear receptor PPARD regulating the expression of various genes involved in glucose and lipid metabolism and oxidative phosphorylation. Also acts as a negative regulator of the ribosome quality control (RQC) by mediating deubiquitination of 40S ribosomal proteins RPS10/eS10 and RPS20/uS10, thereby antagonizing ZNF598-mediated 40S ubiquitination. The chain is Ubiquitin carboxyl-terminal hydrolase 21 (USP21) from Bos taurus (Bovine).